Reading from the N-terminus, the 327-residue chain is Phenylalanine--tRNA ligase alpha subunit (327 aa).

Glutamate 252 contacts Mg(2+).

It belongs to the class-II aminoacyl-tRNA synthetase family. Phe-tRNA synthetase alpha subunit type 1 subfamily. As to quaternary structure, tetramer of two alpha and two beta subunits. It depends on Mg(2+) as a cofactor.

It localises to the cytoplasm. It catalyses the reaction tRNA(Phe) + L-phenylalanine + ATP = L-phenylalanyl-tRNA(Phe) + AMP + diphosphate + H(+). The polypeptide is Phenylalanine--tRNA ligase alpha subunit (Salmonella agona (strain SL483)).